The following is a 138-amino-acid chain: Phosphoribosyl-AMP cyclohydrolase (138 aa).

Mg(2+) is bound at residue aspartate 84. A Zn(2+)-binding site is contributed by cysteine 85. Residues aspartate 86 and aspartate 88 each contribute to the Mg(2+) site. Zn(2+)-binding residues include cysteine 102 and cysteine 109.

The protein belongs to the PRA-CH family. In terms of assembly, homodimer. Mg(2+) is required as a cofactor. Requires Zn(2+) as cofactor.

The protein resides in the cytoplasm. It carries out the reaction 1-(5-phospho-beta-D-ribosyl)-5'-AMP + H2O = 1-(5-phospho-beta-D-ribosyl)-5-[(5-phospho-beta-D-ribosylamino)methylideneamino]imidazole-4-carboxamide. Its pathway is amino-acid biosynthesis; L-histidine biosynthesis; L-histidine from 5-phospho-alpha-D-ribose 1-diphosphate: step 3/9. In terms of biological role, catalyzes the hydrolysis of the adenine ring of phosphoribosyl-AMP. This chain is Phosphoribosyl-AMP cyclohydrolase, found in Burkholderia pseudomallei (strain K96243).